Consider the following 440-residue polypeptide: 3-phosphoshikimate 1-carboxyvinyltransferase (440 aa).

Positions 26, 27, and 31 each coordinate 3-phosphoshikimate. A phosphoenolpyruvate-binding site is contributed by Lys26. The phosphoenolpyruvate site is built by Gly100 and Arg134. 3-phosphoshikimate contacts are provided by Ser180, Ser181, Gln182, Ser208, Asp323, Asn346, and Lys350. Gln182 is a phosphoenolpyruvate binding site. The Proton acceptor role is filled by Asp323. Phosphoenolpyruvate is bound by residues Arg354, Arg398, and Lys423.

Belongs to the EPSP synthase family. In terms of assembly, monomer.

Its subcellular location is the cytoplasm. It carries out the reaction 3-phosphoshikimate + phosphoenolpyruvate = 5-O-(1-carboxyvinyl)-3-phosphoshikimate + phosphate. The protein operates within metabolic intermediate biosynthesis; chorismate biosynthesis; chorismate from D-erythrose 4-phosphate and phosphoenolpyruvate: step 6/7. In terms of biological role, catalyzes the transfer of the enolpyruvyl moiety of phosphoenolpyruvate (PEP) to the 5-hydroxyl of shikimate-3-phosphate (S3P) to produce enolpyruvyl shikimate-3-phosphate and inorganic phosphate. This Pasteurella multocida (strain Pm70) protein is 3-phosphoshikimate 1-carboxyvinyltransferase.